The chain runs to 323 residues: Oligodendrocyte transcription factor 2 (323 aa).

Positions 1-13 (MDSDASLVSSRPS) are enriched in polar residues. A disordered region spans residues 1–107 (MDSDASLVSS…KKQMTEPELQ (107 aa)). The segment covering 77–93 (SSSSSTSSSTSSAATSS) has biased composition (low complexity). The region spanning 108–162 (QLRLKINSRERKRMHDLNIAMDGLREVMPYAHGPSVRKLSKIATLLLARNYILML) is the bHLH domain.

Interacts with NKX2-2. Interacts with ZNF488. In terms of tissue distribution, expressed specifically in the brain.

Its subcellular location is the nucleus. The protein resides in the cytoplasm. In terms of biological role, required for oligodendrocyte and motor neuron specification in the spinal cord, as well as for the development of somatic motor neurons in the hindbrain. Functions together with ZNF488 to promote oligodendrocyte differentiation. Cooperates with OLIG1 to establish the pMN domain of the embryonic neural tube. Antagonist of V2 interneuron and of NKX2-2-induced V3 interneuron development. In Mus musculus (Mouse), this protein is Oligodendrocyte transcription factor 2 (Olig2).